A 421-amino-acid polypeptide reads, in one-letter code: Testin (421 aa).

A PET domain is found at 92 to 199 (MILTNPVAAK…GDVKLPREMD (108 aa)). The tract at residues 133-164 (EKQPVAGSEGAQYRKKQLAKQLPAHDQDPSKC) is disordered. The segment covering 155–164 (PAHDQDPSKC) has biased composition (basic and acidic residues). LIM zinc-binding domains follow at residues 234-297 (YSCY…CDSE), 299-359 (PRCA…NHAV), and 362-421 (QGCH…KMMS).

Belongs to the prickle / espinas / testin family. Interacts via LIM domain 1 with ZYX. Interacts (via LIM domain 3) with ENAH and VASP. Interacts with ALKBH4, talin, actin, alpha-actinin, GRIP1 and PXN. Interacts (via LIM domain 2) with ACTL7A (via N-terminus). Heterodimer with ACTL7A; the heterodimer interacts with ENAH to form a heterotrimer.

Its subcellular location is the cytoplasm. The protein resides in the cell junction. It is found in the focal adhesion. Functionally, scaffold protein that may play a role in cell adhesion, cell spreading and in the reorganization of the actin cytoskeleton. Plays a role in the regulation of cell proliferation. May act as a tumor suppressor. In Equus caballus (Horse), this protein is Testin (TES).